The sequence spans 531 residues: Bifunctional aspartate aminotransferase and L-aspartate beta-decarboxylase (531 aa).

The L-aspartate site is built by glycine 114 and asparagine 255. Lysine 314 is modified (N6-(pyridoxal phosphate)lysine). Residue arginine 496 coordinates L-aspartate.

This sequence belongs to the class-I pyridoxal-phosphate-dependent aminotransferase family. In terms of assembly, homododecamer. Requires pyridoxal 5'-phosphate as cofactor.

The enzyme catalyses L-aspartate + H(+) = L-alanine + CO2. The catalysed reaction is L-aspartate + 2-oxoglutarate = oxaloacetate + L-glutamate. With respect to regulation, inhibited by 10 mM Co(2+), Mn(2+) and Ni(2+), and by 1 mM Cu(2+) and Hg(2+). Functionally, bifunctional enzyme that has both L-aspartate decarboxylase and transaminase activity. Has high activity with L-aspartate, and much lower activity with D-aspartate, L-lysine and L-glutamine. This Pseudomonas sp protein is Bifunctional aspartate aminotransferase and L-aspartate beta-decarboxylase.